The following is a 244-amino-acid chain: N-(5'-phosphoribosyl)anthranilate isomerase 3, chloroplastic (244 aa).

The N-terminal 32 residues, 1-32 (MSTGISSDLHLHPRALNFSKTSKSGLSNRKVS), are a transit peptide targeting the chloroplast.

It belongs to the TrpF family.

It is found in the plastid. It localises to the chloroplast. It catalyses the reaction N-(5-phospho-beta-D-ribosyl)anthranilate = 1-(2-carboxyphenylamino)-1-deoxy-D-ribulose 5-phosphate. Its pathway is amino-acid biosynthesis; L-tryptophan biosynthesis; L-tryptophan from chorismate: step 3/5. This chain is N-(5'-phosphoribosyl)anthranilate isomerase 3, chloroplastic (PAI3), found in Arabidopsis thaliana (Mouse-ear cress).